The chain runs to 125 residues: Desulfoferrodoxin homolog (125 aa).

Residues Cys-10, Cys-13, Cys-29, Cys-30, His-49, His-69, His-75, Cys-116, and His-119 each coordinate Fe cation.

It belongs to the desulfoferrodoxin family. The cofactor is Fe(3+). It depends on Cu(2+) as a cofactor.

This Archaeoglobus fulgidus (strain ATCC 49558 / DSM 4304 / JCM 9628 / NBRC 100126 / VC-16) protein is Desulfoferrodoxin homolog.